Reading from the N-terminus, the 254-residue chain is 3-deoxy-manno-octulosonate cytidylyltransferase (254 aa).

This sequence belongs to the KdsB family.

It localises to the cytoplasm. It carries out the reaction 3-deoxy-alpha-D-manno-oct-2-ulosonate + CTP = CMP-3-deoxy-beta-D-manno-octulosonate + diphosphate. The protein operates within nucleotide-sugar biosynthesis; CMP-3-deoxy-D-manno-octulosonate biosynthesis; CMP-3-deoxy-D-manno-octulosonate from 3-deoxy-D-manno-octulosonate and CTP: step 1/1. Its pathway is bacterial outer membrane biogenesis; lipopolysaccharide biosynthesis. In terms of biological role, activates KDO (a required 8-carbon sugar) for incorporation into bacterial lipopolysaccharide in Gram-negative bacteria. This Haemophilus influenzae (strain PittEE) protein is 3-deoxy-manno-octulosonate cytidylyltransferase.